We begin with the raw amino-acid sequence, 587 residues long: Ran GTPase-activating protein 1 (587 aa).

A2 is subject to N-acetylalanine. A Glycyl lysine isopeptide (Lys-Gly) (interchain with G-Cter in SUMO1); alternate cross-link involves residue K8. Residue K8 forms a Glycyl lysine isopeptide (Lys-Gly) (interchain with G-Cter in SUMO2); alternate linkage. Residue K15 forms a Glycyl lysine isopeptide (Lys-Gly) (interchain with G-Cter in SUMO2) linkage. S24 carries the post-translational modification Phosphoserine. LRR repeat units follow at residues F48–K71, G111–A134, I207–Q230, and N235–E258. Residue K279 forms a Glycyl lysine isopeptide (Lys-Gly) (interchain with G-Cter in SUMO2) linkage. 2 LRR repeats span residues L292–D319 and K320–E343. S301 is subject to Phosphoserine. The disordered stretch occupies residues L357–P430. S358 is subject to Phosphoserine. A compositionally biased stretch (acidic residues) spans S358–E397. A compositionally biased stretch (polar residues) spans Q400–P410. T409 is modified (phosphothreonine; by CDK2). A phosphoserine mark is found at S428 and S435. T436 bears the Phosphothreonine mark. S442 carries the post-translational modification Phosphoserine. K452 participates in a covalent cross-link: Glycyl lysine isopeptide (Lys-Gly) (interchain with G-Cter in SUMO2). An SUMO conjugation motif is present at residues L523–E526. K524 participates in a covalent cross-link: Glycyl lysine isopeptide (Lys-Gly) (interchain with G-Cter in SUMO1); alternate. A Glycyl lysine isopeptide (Lys-Gly) (interchain with G-Cter in SUMO2); alternate cross-link involves residue K524. K524 carries the post-translational modification N6-acetyllysine; alternate. A Glycyl lysine isopeptide (Lys-Gly) (interchain with G-Cter in SUMO2) cross-link involves residue K586.

It belongs to the RNA1 family. As to quaternary structure, homodimer. Interacts with RAN. Forms a complex with RANBP2/NUP358, NXF1 and NXT1. Forms a tight complex in association with RANBP2/NUP358 and UBE2I/UBC9, the ubiquitin-conjugating enzyme E2. Interacts with UBE2I; the interaction conjugates SUMO1 to RANGAP1, and subsequently stabilizes interactions of sumoylated RANGAP1 with RANBP2/NUP358. The complex composed of RANBP2, SUMO1, RANGAP1 and UBE2I associates with nuclear pore complexes. Identified in a complex composed of RAN, RANBP2, sumoylated RANGAP1, UBE2I and XPO1. Identified in a complex composed of RAN, RANGAP1 and RANBP1. Interacts with TRAF6. Interacts with SUMO1 and SENP1. Interacts (when sumoylated) with MYCBP2; interaction inhibits MYCBP2 E3 ubiquitin-protein ligase activity and promotes MYCBP2 translocation to the nucleus. Phosphorylation occurs before nuclear envelope breakdown and continues throughout mitosis. Phosphorylated by the M-phase kinase cyclin B/Cdk1, in vitro. Differential timimg of dephosphorylation occurs during phases of mitosis. The phosphorylated form remains associated with RANBP2/NUP358 and the SUMO E2-conjugating enzyme, UBE2I, on nuclear pore complex (NPC) diassembly and during mitosis. In terms of processing, sumoylated. Sumoylation is necessary for targeting to the nuclear envelope (NE), and for association with mitotic spindles and kinetochores during mitosis. Also required for interaction with RANBP2 and is mediated by UBE2I. Desumoylated by HINT1. Highly expressed in brain, thymus and testis.

Its subcellular location is the cytoplasm. It localises to the nucleus. The protein resides in the nucleoplasm. It is found in the nucleus envelope. The protein localises to the chromosome. Its subcellular location is the centromere. It localises to the kinetochore. The protein resides in the cytoskeleton. It is found in the spindle. Its function is as follows. GTPase activator for RAN. Converts cytoplasmic GTP-bound RAN to GDP-bound RAN, which is essential for RAN-mediated nuclear import and export. Mediates dissociation of cargo from nuclear export complexes containing XPO1, RAN and RANBP2 after nuclear export. The protein is Ran GTPase-activating protein 1 (RANGAP1) of Homo sapiens (Human).